The following is a 274-amino-acid chain: Large ribosomal subunit protein uL2cz/uL2cy (274 aa).

Disordered regions lie at residues 1 to 33 (MAIHLYKTSTPSTRKRAVDSQGKSNPRNHLIYG) and 223 to 265 (MNPV…KYND).

This sequence belongs to the universal ribosomal protein uL2 family. Part of the 50S ribosomal subunit.

The protein resides in the plastid. It localises to the chloroplast. The chain is Large ribosomal subunit protein uL2cz/uL2cy (rpl2-A) from Pelargonium hortorum (Common geranium).